The sequence spans 244 residues: Probable transcriptional regulatory protein Aasi_0624 (244 aa).

Belongs to the TACO1 family.

It localises to the cytoplasm. In Amoebophilus asiaticus (strain 5a2), this protein is Probable transcriptional regulatory protein Aasi_0624.